The chain runs to 546 residues: Glucose-6-phosphate isomerase (546 aa).

Glu-353 functions as the Proton donor in the catalytic mechanism. Residues His-384 and Lys-512 contribute to the active site.

This sequence belongs to the GPI family.

The protein resides in the cytoplasm. It catalyses the reaction alpha-D-glucose 6-phosphate = beta-D-fructose 6-phosphate. Its pathway is carbohydrate biosynthesis; gluconeogenesis. It participates in carbohydrate degradation; glycolysis; D-glyceraldehyde 3-phosphate and glycerone phosphate from D-glucose: step 2/4. In terms of biological role, catalyzes the reversible isomerization of glucose-6-phosphate to fructose-6-phosphate. The sequence is that of Glucose-6-phosphate isomerase from Actinobacillus pleuropneumoniae serotype 5b (strain L20).